Reading from the N-terminus, the 340-residue chain is HTH-type transcriptional regulator CelR (340 aa).

An HTH lacI-type domain is found at 1–61 (MERRRRPTLE…PNRAARTLVT (61 aa)). Residues 9 to 28 (LEMVAALAGVGRGTVSRVIN) constitute a DNA-binding region (H-T-H motif).

The protein resides in the cytoplasm. Activity is controlled by cytoplasmic cellobiose levels. Binding of CelR to the celE promoter is inhibited specifically by low concentrations of cellobiose, the major end product of cellulases. Activity may also be regulated through post-translational modification. In terms of biological role, transcriptional regulator that regulates the expression of all six cellulases, encoded by the cel genes (designated celA through celF). Acts as a repressor. Specifically binds to a 14-bp inverted repeat site, which is present in the upstream region of the cellulase genes. This chain is HTH-type transcriptional regulator CelR, found in Thermobifida fusca (Thermomonospora fusca).